A 337-amino-acid chain; its full sequence is DNA-directed RNA polymerase subunit alpha (337 aa).

The alpha N-terminal domain (alpha-NTD) stretch occupies residues 1–231 (MRNITTSAYT…KQLSVFDKIT (231 aa)). The tract at residues 247 to 337 (ENTKLLQNIT…IAELKAQNEG (91 aa)) is alpha C-terminal domain (alpha-CTD).

This sequence belongs to the RNA polymerase alpha chain family. As to quaternary structure, homodimer. The RNAP catalytic core consists of 2 alpha, 1 beta, 1 beta' and 1 omega subunit. When a sigma factor is associated with the core the holoenzyme is formed, which can initiate transcription.

It carries out the reaction RNA(n) + a ribonucleoside 5'-triphosphate = RNA(n+1) + diphosphate. Functionally, DNA-dependent RNA polymerase catalyzes the transcription of DNA into RNA using the four ribonucleoside triphosphates as substrates. The protein is DNA-directed RNA polymerase subunit alpha of Campylobacter jejuni subsp. jejuni serotype O:2 (strain ATCC 700819 / NCTC 11168).